The following is a 78-amino-acid chain: uncharacterized protein (78 aa).

This is an uncharacterized protein from Escherichia coli (strain K12).